A 653-amino-acid chain; its full sequence is J protein JJJ2 (653 aa).

Residues 14 to 78 (TLYSVLNLKY…KEKMKYDSKL (65 aa)) form the J domain. Disordered stretches follow at residues 85–308 (DYSP…SSTE) and 490–512 (VSPKPRSVPSKTTPGSSHAEENL). Polar residues-rich tracts occupy residues 161–171 (NAKSYQNSKKS) and 187–200 (ATSFSNENRNSSSV). Residues 213-241 (SGSAVGSESRISSSGSESSSNVNSATGSS) show a composition bias toward low complexity. Over residues 298 to 308 (PVKTTPNSSTE) the composition is skewed to polar residues.

The protein localises to the cytoplasm. Its subcellular location is the nucleus. This chain is J protein JJJ2 (JJJ2), found in Kluyveromyces lactis (strain ATCC 8585 / CBS 2359 / DSM 70799 / NBRC 1267 / NRRL Y-1140 / WM37) (Yeast).